Consider the following 186-residue polypeptide: Hydra actinoporin-like toxin 5 (186 aa).

The first 20 residues, 1–20 (MLLYVCLVNLLLQSPSGVDS), serve as a signal peptide directing secretion. Residues 158–160 (RDG) carry the Cell attachment site motif.

It belongs to the actinoporin family. HALT subfamily. As to quaternary structure, octamer or nonamer in membranes. Monomer in the soluble state. In vitro, interacts with folate receptor alpha (of target organism).

The protein resides in the nematocyst. The protein localises to the secreted. It is found in the target cell membrane. Functionally, pore-forming protein that forms hydrophilic pores and causes cytolysis. Compared to equinatoxin-2 (AC P61914), it reveals lower cytolysis activity (5-12-fold difference, tested on erythrocytes), a larger pore size (probably 2-3 nm) and different affinity to membrane lipids (100-fold lower affinity to sphingomyelin). Binds to sulfatides (SFT) as well as to the two sphingolipids, lysophosphatidic acid (LPA) and sphingosine-1-phosphate (S1P). It seems to bind more strongly to LPA than to S1P and SFT. Shows cytolytic activity on HeLa cells, with a different potency than its paralogs (from most potent to less potent: HALT-4&gt;HALT-6~HALT-1&gt;HALT-3&gt;HALT-7&gt;HALT-2). Pore formation is a multi-step process that involves specific recognition of membrane lipid by a protein aromatic residues rich region, firm binding to the membrane (mainly driven by hydrophobic interactions) accompanied by the transfer of the N-terminal region to the lipid-water interface and finally pore formation after oligomerization of monomers. In vitro, binds to the folate receptor alpha (FOLR1), a GPI-anchored membrane protein that plays a major role in the uptake of folate/folic acid into cells via endocytosis, suggesting a possible involvement of this receptor in the mechanism of HALT-1-induced cell lysis. In vivo, does not cause visible paralysis in larvae of the blowfly Sarcophaga faculata, the most common arthropod prey of Hydra. The sequence is that of Hydra actinoporin-like toxin 5 from Hydra vulgaris (Hydra).